The following is a 187-amino-acid chain: uncharacterized protein (187 aa).

Gly-2 carries N-myristoyl glycine; by host lipidation.

This sequence belongs to the mimivirus L332/L333/L334 family.

This is an uncharacterized protein from Acanthamoeba polyphaga (Amoeba).